The sequence spans 252 residues: tRNA (guanine-N(1)-)-methyltransferase (252 aa).

S-adenosyl-L-methionine-binding positions include G118 and I138 to L143.

It belongs to the RNA methyltransferase TrmD family. As to quaternary structure, homodimer.

The protein resides in the cytoplasm. The enzyme catalyses guanosine(37) in tRNA + S-adenosyl-L-methionine = N(1)-methylguanosine(37) in tRNA + S-adenosyl-L-homocysteine + H(+). Functionally, specifically methylates guanosine-37 in various tRNAs. The sequence is that of tRNA (guanine-N(1)-)-methyltransferase from Pseudomonas aeruginosa (strain UCBPP-PA14).